The following is a 198-amino-acid chain: Recombination protein RecR (198 aa).

The C4-type zinc finger occupies 56–71 (CTTCGNIDTHDPCAIC). The region spanning 79–174 (RSLCVVEEVS…RLTQLAHGLP (96 aa)) is the Toprim domain.

Belongs to the RecR family.

May play a role in DNA repair. It seems to be involved in an RecBC-independent recombinational process of DNA repair. It may act with RecF and RecO. This is Recombination protein RecR from Sphingopyxis alaskensis (strain DSM 13593 / LMG 18877 / RB2256) (Sphingomonas alaskensis).